The sequence spans 213 residues: Adenylate kinase (213 aa).

10–15 is a binding site for ATP; that stretch reads GAGKGT. Residues 30 to 59 form an NMP region; it reads STGDMFRAAMANQTEMGVLAKSYIDKGDLV. AMP contacts are provided by residues Thr-31, Arg-36, 57-59, 86-89, and Gln-93; these read DLV and GYPR. An LID region spans residues 127–160; that stretch reads GRIINKKTGETFHKIFNPPVGDYKEEDFYQREDD. ATP is bound by residues Arg-128 and 137–138; that span reads TF. 2 residues coordinate AMP: Arg-157 and Arg-168. Position 196 (Lys-196) interacts with ATP.

Belongs to the adenylate kinase family. As to quaternary structure, monomer.

It is found in the cytoplasm. It catalyses the reaction AMP + ATP = 2 ADP. Its pathway is purine metabolism; AMP biosynthesis via salvage pathway; AMP from ADP: step 1/1. Catalyzes the reversible transfer of the terminal phosphate group between ATP and AMP. Plays an important role in cellular energy homeostasis and in adenine nucleotide metabolism. This chain is Adenylate kinase, found in Streptococcus equi subsp. equi (strain 4047).